A 161-amino-acid chain; its full sequence is RNA pyrophosphohydrolase (161 aa).

The Nudix hydrolase domain maps to 7 to 149 (KYRPCVGIML…KKEVYKTVIE (143 aa)). Positions 40–61 (GGIDDGEKLEQAALRELLEEVG) match the Nudix box motif.

The protein belongs to the Nudix hydrolase family. RppH subfamily. It depends on a divalent metal cation as a cofactor.

Functionally, accelerates the degradation of transcripts by removing pyrophosphate from the 5'-end of triphosphorylated RNA, leading to a more labile monophosphorylated state that can stimulate subsequent ribonuclease cleavage. The chain is RNA pyrophosphohydrolase from Wolbachia sp. subsp. Brugia malayi (strain TRS).